The primary structure comprises 366 residues: Cobalt-precorrin-5B C(1)-methyltransferase (366 aa).

Belongs to the CbiD family.

The catalysed reaction is Co-precorrin-5B + S-adenosyl-L-methionine = Co-precorrin-6A + S-adenosyl-L-homocysteine. It functions in the pathway cofactor biosynthesis; adenosylcobalamin biosynthesis; cob(II)yrinate a,c-diamide from sirohydrochlorin (anaerobic route): step 6/10. Functionally, catalyzes the methylation of C-1 in cobalt-precorrin-5B to form cobalt-precorrin-6A. The polypeptide is Cobalt-precorrin-5B C(1)-methyltransferase (Pseudomonas paraeruginosa (strain DSM 24068 / PA7) (Pseudomonas aeruginosa (strain PA7))).